The chain runs to 510 residues: Cytochrome c-552 (510 aa).

The N-terminal stretch at M1–A50 is a signal peptide. Residue H124 participates in heme c binding. Residues C152, C155, and K156 each contribute to the heme site. The heme c site is built by C190, C193, H194, C239, C242, and H243. Residues E245, Y246, K291, and Q293 each contribute to the Ca(2+) site. Position 246 (Y246) interacts with substrate. H294 is a substrate binding site. Heme c is bound by residues H305, C312, C315, H316, H331, C344, C347, H348, and H423.

It belongs to the cytochrome c-552 family. It depends on Ca(2+) as a cofactor. Heme c serves as cofactor.

The protein resides in the periplasm. It carries out the reaction 6 Fe(III)-[cytochrome c] + NH4(+) + 2 H2O = 6 Fe(II)-[cytochrome c] + nitrite + 8 H(+). It functions in the pathway nitrogen metabolism; nitrate reduction (assimilation). Its function is as follows. Catalyzes the reduction of nitrite to ammonia, consuming six electrons in the process. This chain is Cytochrome c-552, found in Pasteurella multocida (strain Pm70).